A 337-amino-acid chain; its full sequence is MIIFFEIWHWSWALLGCYLNLLLAYLAIFKSPKAIKSYATLIINYAATDFVECALDSFLQTRLLAVPGEAELVYIFNGPCKYIGSISCKVGLSFFLHCLTHSVWSLLLSFGYRFYILHNPSLSRLVLLKLILVFYIPSLIQALTYWTIFASREEILPLARQWFPYYDLDAETGVLTGIIDLTNFVAIYSIGHICLPFFPVYITIFILRQKIINQLHVKQHVMSPDTKAAHSQLLKALTIQAFIPIFVGIAVTFYFLSQSGLVRSPILEYSIYAVAILAPALSPITYLYFVRPYRQNVKRFIANPFKILLNTNTGSSIGVFHSGGRPSNFATTLNTSR.

6 helical membrane passes run isoleucine 2–leucine 22, valine 90–phenylalanine 110, leucine 130–alanine 150, isoleucine 187–leucine 207, alanine 236–leucine 256, and serine 270–valine 290.

Belongs to the nematode receptor-like protein srd family.

It is found in the membrane. In Caenorhabditis elegans, this protein is Serpentine receptor class delta-18 (srd-18).